Reading from the N-terminus, the 91-residue chain is Acyl-CoA-binding domain-containing protein 2 (91 aa).

Residues 3-88 (LQEEFEEFAE…VKQLLEEASA (86 aa)) enclose the ACB domain. An acyl-CoA-binding positions include K15, 30–34 (YGLYK), K52, K56, and Y75.

It belongs to the ACBP family. As to expression, highly expressed in leaves. Expressed at low levels in roots and seeds.

It is found in the cytoplasm. The protein localises to the cytosol. Binds medium- and long-chain acyl-CoA esters with high affinity. Can interact in vitro with linolenoyl-CoA. Binds palmitoyl-CoA and linoleoyl-CoA in vitro. Binds phosphatidic acid (PA) and phosphatidylcholine (PC) in vitro. May play a role in the biosynthesis of phospholipids. The protein is Acyl-CoA-binding domain-containing protein 2 of Oryza sativa subsp. japonica (Rice).